Consider the following 331-residue polypeptide: ADP-L-glycero-D-manno-heptose-6-epimerase (331 aa).

Residues 11–12 (FI), 32–33 (DN), K39, K54, 75–79 (EGACS), and N92 contribute to the NADP(+) site. Catalysis depends on Y139, which acts as the Proton acceptor. Residue K143 participates in NADP(+) binding. N168 provides a ligand contact to substrate. NADP(+)-binding residues include V169 and K177. K177 (proton acceptor) is an active-site residue. Residues R179, H186, 200-203 (FGEY), R213, and Y292 contribute to the substrate site.

Belongs to the NAD(P)-dependent epimerase/dehydratase family. HldD subfamily. As to quaternary structure, homopentamer. Requires NADP(+) as cofactor.

The catalysed reaction is ADP-D-glycero-beta-D-manno-heptose = ADP-L-glycero-beta-D-manno-heptose. It participates in nucleotide-sugar biosynthesis; ADP-L-glycero-beta-D-manno-heptose biosynthesis; ADP-L-glycero-beta-D-manno-heptose from D-glycero-beta-D-manno-heptose 7-phosphate: step 4/4. In terms of biological role, catalyzes the interconversion between ADP-D-glycero-beta-D-manno-heptose and ADP-L-glycero-beta-D-manno-heptose via an epimerization at carbon 6 of the heptose. The chain is ADP-L-glycero-D-manno-heptose-6-epimerase from Cupriavidus necator (strain ATCC 17699 / DSM 428 / KCTC 22496 / NCIMB 10442 / H16 / Stanier 337) (Ralstonia eutropha).